A 428-amino-acid polypeptide reads, in one-letter code: Dihydroorotase (428 aa).

2 residues coordinate Zn(2+): histidine 59 and histidine 61. Residues 61–63 (HLR) and asparagine 93 each bind substrate. Aspartate 151, histidine 178, and histidine 231 together coordinate Zn(2+). Asparagine 277 provides a ligand contact to substrate. Residue aspartate 304 participates in Zn(2+) binding. Aspartate 304 is a catalytic residue. Substrate contacts are provided by residues histidine 308 and 322 to 323 (FG).

It belongs to the metallo-dependent hydrolases superfamily. DHOase family. Class I DHOase subfamily. Zn(2+) is required as a cofactor.

It carries out the reaction (S)-dihydroorotate + H2O = N-carbamoyl-L-aspartate + H(+). It functions in the pathway pyrimidine metabolism; UMP biosynthesis via de novo pathway; (S)-dihydroorotate from bicarbonate: step 3/3. In terms of biological role, catalyzes the reversible cyclization of carbamoyl aspartate to dihydroorotate. The polypeptide is Dihydroorotase (Bacillus anthracis (strain A0248)).